The primary structure comprises 638 residues: Zinc finger protein 143 (638 aa).

Position 1 is an N-acetylmethionine (methionine 1). A Glycyl lysine isopeptide (Lys-Gly) (interchain with G-Cter in SUMO2) cross-link involves residue lysine 213. 4 consecutive C2H2-type zinc fingers follow at residues 237–261, 267–291, 297–321, and 327–351; these read FRCE…ERSH, YQCE…VRTH, YRCS…IRTH, and FKCP…VRTH. Threonine 352 is subject to Phosphothreonine. C2H2-type zinc fingers lie at residues 357–381, 387–411, and 417–440; these read YYCT…VRIH, YVCT…HVVH, and YNCN…RTAH. Lysine 406 participates in a covalent cross-link: Glycyl lysine isopeptide (Lys-Gly) (interchain with G-Cter in SUMO2).

Belongs to the GLI C2H2-type zinc-finger protein family. In terms of assembly, interacts with CHD8. Forms a complex with HCFC1 and ZNF143. Expressed in all tissues tested, with the strongest expression in ovary.

Its subcellular location is the nucleus. In terms of biological role, transcriptional activator. Activates the gene for selenocysteine tRNA (tRNAsec). Binds to the SPH motif of small nuclear RNA (snRNA) gene promoters. Participates in efficient U6 RNA polymerase III transcription via its interaction with CHD8. In complex with HCFC1 and ZNF143, regulates the expression of several genes, including AP2S1, ESCO2, OPHN1, RBL1, UBXN8 and ZNF32. The polypeptide is Zinc finger protein 143 (ZNF143) (Homo sapiens (Human)).